The chain runs to 147 residues: Myoglobin (147 aa).

Residues 2-141 form the Globin domain; that stretch reads ADFDAVLKCW…IIADLEANYK (140 aa). H60 is a binding site for nitrite. Residue H60 participates in O2 binding. H89 contacts heme b.

This sequence belongs to the globin family. In terms of assembly, monomeric.

It localises to the cytoplasm. The protein localises to the sarcoplasm. It carries out the reaction Fe(III)-heme b-[protein] + nitric oxide + H2O = Fe(II)-heme b-[protein] + nitrite + 2 H(+). It catalyses the reaction H2O2 + AH2 = A + 2 H2O. Functionally, monomeric heme protein which primary function is to store oxygen and facilitate its diffusion within muscle tissues. Reversibly binds oxygen through a pentacoordinated heme iron and enables its timely and efficient release as needed during periods of heightened demand. Depending on the oxidative conditions of tissues and cells, and in addition to its ability to bind oxygen, it also has a nitrite reductase activity whereby it regulates the production of bioactive nitric oxide. Under stress conditions, like hypoxia and anoxia, it also protects cells against reactive oxygen species thanks to its pseudoperoxidase activity. The protein is Myoglobin (mb) of Thunnus obesus (Bigeye tuna).